We begin with the raw amino-acid sequence, 555 residues long: Protein NRT1/ PTR FAMILY 5.12 (555 aa).

A run of 2 helical transmembrane segments spans residues 53-73 (FAYF…LGES) and 83-103 (LWLG…DSFL). Position 108 is a phosphothreonine (threonine 108). 10 helical membrane passes run 109 to 129 (ILLT…SATI), 148 to 168 (VIIF…FKVC), 190 to 210 (SYFN…RLVT), 221 to 241 (LGYA…LLGI), 315 to 335 (AVLS…VFAQ), 357 to 377 (VPAA…IPIY), 401 to 421 (ISTG…VEMK), 443 to 463 (VCWL…TMVG), 482 to 502 (ALYL…VSVI), and 526 to 546 (YFYW…VYFA).

It belongs to the major facilitator superfamily. Proton-dependent oligopeptide transporter (POT/PTR) (TC 2.A.17) family. In terms of tissue distribution, expressed in shoots and roots.

The protein resides in the membrane. The sequence is that of Protein NRT1/ PTR FAMILY 5.12 (NPF5.12) from Arabidopsis thaliana (Mouse-ear cress).